A 341-amino-acid polypeptide reads, in one-letter code: L-threonine 3-dehydrogenase (341 aa).

C38 is a Zn(2+) binding site. Catalysis depends on charge relay system residues T40 and H43. Zn(2+) contacts are provided by H63, E64, C93, C96, C99, and C107. Residues I175, D195, R200, L262 to I264, and I286 to Y287 contribute to the NAD(+) site.

Belongs to the zinc-containing alcohol dehydrogenase family. In terms of assembly, homotetramer. Requires Zn(2+) as cofactor.

The protein resides in the cytoplasm. It catalyses the reaction L-threonine + NAD(+) = (2S)-2-amino-3-oxobutanoate + NADH + H(+). It participates in amino-acid degradation; L-threonine degradation via oxydo-reductase pathway; glycine from L-threonine: step 1/2. In terms of biological role, catalyzes the NAD(+)-dependent oxidation of L-threonine to 2-amino-3-ketobutyrate. The chain is L-threonine 3-dehydrogenase from Shewanella loihica (strain ATCC BAA-1088 / PV-4).